We begin with the raw amino-acid sequence, 100 residues long: Urease subunit gamma (100 aa).

The protein belongs to the urease gamma subunit family. Heterotrimer of UreA (gamma), UreB (beta) and UreC (alpha) subunits. Three heterotrimers associate to form the active enzyme.

The protein resides in the cytoplasm. The enzyme catalyses urea + 2 H2O + H(+) = hydrogencarbonate + 2 NH4(+). Its pathway is nitrogen metabolism; urea degradation; CO(2) and NH(3) from urea (urease route): step 1/1. The protein is Urease subunit gamma of Pseudomonas syringae pv. syringae (strain B728a).